A 513-amino-acid chain; its full sequence is Flavonoid 3'-monooxygenase (513 aa).

A helical transmembrane segment spans residues 1 to 21 (MATLFLTILLATVLFLILRIF). Residues 22–513 (SHRRNRSHNN…APNVYGLGSG (492 aa)) lie on the Cytoplasmic side of the membrane. Cys-445 contributes to the heme binding site.

The protein belongs to the cytochrome P450 family. Requires heme as cofactor. In terms of tissue distribution, high expression in siliques and to a lower extent in stems, flowers and senescing leaves.

The protein localises to the endoplasmic reticulum membrane. The catalysed reaction is a 3'-unsubstituted flavone + reduced [NADPH--hemoprotein reductase] + O2 = a 3'-hydroxyflavone + oxidized [NADPH--hemoprotein reductase] + H2O + H(+). Its pathway is secondary metabolite biosynthesis; flavonoid biosynthesis. Catalyzes the 3'-hydroxylation of the flavonoid B-ring to the 3',4'-hydroxylated state. Convert naringenin to eriodictyol and dihydrokaempferol to dihydroquercetin. The polypeptide is Flavonoid 3'-monooxygenase (CYP75B1) (Arabidopsis thaliana (Mouse-ear cress)).